We begin with the raw amino-acid sequence, 551 residues long: RCC1 and BTB domain-containing protein 2 (551 aa).

RCC1 repeat units lie at residues 64 to 115, 117 to 169, 171 to 222, 223 to 274, 276 to 326, and 328 to 382; these read NDEI…VLAT, EGEV…VLTS, GEVF…AVVD, TGEV…VLTD, GQVY…AAKT, and GGHV…TVAE. The BTB domain occupies 394-457; sequence ADLKFLVDGK…LYTDSISLSP (64 aa).

It is found in the cytoplasmic vesicle. The protein resides in the secretory vesicle. It localises to the acrosome. The chain is RCC1 and BTB domain-containing protein 2 (RCBTB2) from Homo sapiens (Human).